Here is a 210-residue protein sequence, read N- to C-terminus: 3-demethoxyubiquinol 3-hydroxylase (210 aa).

6 residues coordinate Fe cation: Glu59, Glu89, His92, Glu141, Glu173, and His176.

This sequence belongs to the COQ7 family. The cofactor is Fe cation.

The protein localises to the cell membrane. The catalysed reaction is a 5-methoxy-2-methyl-3-(all-trans-polyprenyl)benzene-1,4-diol + AH2 + O2 = a 3-demethylubiquinol + A + H2O. It participates in cofactor biosynthesis; ubiquinone biosynthesis. In terms of biological role, catalyzes the hydroxylation of 2-nonaprenyl-3-methyl-6-methoxy-1,4-benzoquinol during ubiquinone biosynthesis. The chain is 3-demethoxyubiquinol 3-hydroxylase from Albidiferax ferrireducens (strain ATCC BAA-621 / DSM 15236 / T118) (Rhodoferax ferrireducens).